The primary structure comprises 218 residues: Small ribosomal subunit protein uS3 (218 aa).

The region spanning 38–106 is the KH type-2 domain; the sequence is IREYISKRLQ…RVHINIVEIK (69 aa).

The protein belongs to the universal ribosomal protein uS3 family. In terms of assembly, part of the 30S ribosomal subunit. Forms a tight complex with proteins S10 and S14.

Its function is as follows. Binds the lower part of the 30S subunit head. Binds mRNA in the 70S ribosome, positioning it for translation. The polypeptide is Small ribosomal subunit protein uS3 (Geobacillus kaustophilus (strain HTA426)).